The following is a 91-amino-acid chain: Putative transmembrane protein ORF91a (91 aa).

3 consecutive transmembrane segments (helical) span residues 17-37 (TGIS…VGLA), 40-60 (AFLG…LLFM), and 69-89 (GIGF…YIST).

Its subcellular location is the host membrane. The sequence is that of Putative transmembrane protein ORF91a from Acidianus convivator (ABV).